The primary structure comprises 1043 residues: Rho GTPase-activating protein gacZ (1043 aa).

The tract at residues 1 to 44 (MTTTNTSIFGPRVNNSKFNNNNNNNNNNNNNNNNTSNNNNSNII) is disordered. Residues 14 to 44 (NNSKFNNNNNNNNNNNNNNNNTSNNNNSNII) show a composition bias toward low complexity. Zn(2+)-binding residues include C71, C74, C82, C85, C91, H95, H103, and C107. An MYND-type; atypical zinc finger spans residues 71–107 (CVICKSKNVQVCTGCLMVYYCGAEHQNIDWPNHKSLC). Disordered stretches follow at residues 137–163 (SGNR…NNNN), 199–532 (HLQQ…NNSN), 546–594 (DGLS…NGNR), 614–690 (FYQS…TNNN), 706–772 (NTSQ…QLSA), and 801–842 (NKVS…NNNN). Residues 201 to 225 (QQQIQQTQQTQQQPPPTTTSIPTQP) are compositionally biased toward low complexity. The segment covering 241–253 (SFKSSSSGDNTPI) has biased composition (polar residues). Low complexity-rich tracts occupy residues 254–293 (NQSP…NMSG) and 307–411 (NSIN…TNEE). Residues 453–466 (GTLKQSSSSDSIYF) show a composition bias toward polar residues. Low complexity-rich tracts occupy residues 467–532 (NNNN…NNSN) and 547–594 (GLSY…NGNR). Positions 615-625 (YQSNKNQSNGY) are enriched in polar residues. Residues 644–671 (ENDDSHEECDDDDDDDDGGGQDGDDGLD) show a composition bias toward acidic residues. 4 stretches are compositionally biased toward low complexity: residues 726–736 (DTQSQSTNSTT), 752–771 (SSDD…SQLS), 801–821 (NKVS…NNNN), and 829–842 (NNNN…NNNN). Residues 825–852 (DHNENNNNNNNNINNNNNNNNNNIENII) adopt a coiled-coil conformation. A Rho-GAP domain is found at 855-1043 (IPLEEAVKKS…FGIQTYNYNS (189 aa)).

Its subcellular location is the cytoplasm. In terms of biological role, rho GTPase-activating protein involved in the signal transduction pathway. The polypeptide is Rho GTPase-activating protein gacZ (gacZ) (Dictyostelium discoideum (Social amoeba)).